Here is a 230-residue protein sequence, read N- to C-terminus: Ureidoacrylate amidohydrolase RutB (230 aa).

Catalysis depends on D24, which acts as the Proton acceptor. K133 is an active-site residue. Residue C166 is the Nucleophile of the active site.

This sequence belongs to the isochorismatase family. RutB subfamily.

The catalysed reaction is (Z)-3-ureidoacrylate + H2O + H(+) = (Z)-3-aminoacrylate + NH4(+) + CO2. The enzyme catalyses (Z)-3-ureidoacrylate + H2O = (Z)-3-aminoacrylate + carbamate + H(+). It catalyses the reaction (Z)-2-methylureidoacrylate + H2O + H(+) = (Z)-2-methylaminoacrylate + NH4(+) + CO2. In terms of biological role, hydrolyzes ureidoacrylate to form aminoacrylate and carbamate. The carbamate hydrolyzes spontaneously, thereby releasing one of the nitrogen atoms of the pyrimidine ring as ammonia and one of its carbon atoms as CO2. This Escherichia coli O150:H5 (strain SE15) protein is Ureidoacrylate amidohydrolase RutB.